Here is a 251-residue protein sequence, read N- to C-terminus: Flap endonuclease Xni (251 aa).

D104 contacts Mg(2+). Residues 160–249 enclose the 5'-3' exonuclease domain; it reads VSPGQLADFW…LDGNLQQLRL (90 aa). L171, A172, P180, V182, and I185 together coordinate K(+). Residues 184 to 189 are interaction with DNA; the sequence is GIGPKS.

The protein belongs to the Xni family. Mg(2+) is required as a cofactor. It depends on K(+) as a cofactor.

Functionally, has flap endonuclease activity. During DNA replication, flap endonucleases cleave the 5'-overhanging flap structure that is generated by displacement synthesis when DNA polymerase encounters the 5'-end of a downstream Okazaki fragment. This chain is Flap endonuclease Xni, found in Cronobacter sakazakii (strain ATCC BAA-894) (Enterobacter sakazakii).